The primary structure comprises 1187 residues: Trafficking protein particle complex II-specific subunit 120 homolog (1187 aa).

Residues 1037–1059 (GTTAKTDSSKEPGDGSSRSADES) form a disordered region.

The protein belongs to the TRS120 family. In terms of assembly, part of the multisubunit TRAPP (transport protein particle) II complex composed of BET3, BET5, TRS20, TRS23, TRS31, TRS33, TRS65, TRS85, TRS120 and TRS130.

Its subcellular location is the golgi apparatus. The protein localises to the trans-Golgi network. It localises to the early endosome. Functionally, specific subunit of the TRAPP II complex, a highly conserved vesicle tethering complex that is required for the proper transport of proteins in post-Golgi trafficking pathways to the growing cell plate in mitotic active cells. This is Trafficking protein particle complex II-specific subunit 120 homolog from Oryza sativa subsp. japonica (Rice).